We begin with the raw amino-acid sequence, 180 residues long: Transcriptional repressor NrdR (180 aa).

The segment at 3–34 (CPRCSKQEIRVLESRSAEGGQSVRRRRECMSC) is a zinc-finger region. Positions 49 to 139 (IMVIKRDGSR…VYRQFQGIKD (91 aa)) constitute an ATP-cone domain. The tract at residues 155-180 (LERLLQDSSASDSESSGSPDLVGEYS) is disordered. Over residues 160–174 (QDSSASDSESSGSPD) the composition is skewed to low complexity.

It belongs to the NrdR family. Zn(2+) serves as cofactor.

Functionally, negatively regulates transcription of bacterial ribonucleotide reductase nrd genes and operons by binding to NrdR-boxes. In Synechococcus sp. (strain JA-2-3B'a(2-13)) (Cyanobacteria bacterium Yellowstone B-Prime), this protein is Transcriptional repressor NrdR.